Consider the following 182-residue polypeptide: Interferon beta (182 aa).

Residues Met1–Ser21 form the signal peptide. Tyr24 bears the Phosphotyrosine mark. Asn50, Asn90, and Asn97 each carry an N-linked (GlcNAc...) asparagine glycan.

This sequence belongs to the alpha/beta interferon family. As to quaternary structure, monomer. Post-translationally, this beta interferon does not have a disulfide bond.

It is found in the secreted. Functionally, type I interferon cytokine that plays a key role in the innate immune response to infection, developing tumors and other inflammatory stimuli. Signals via binding to high-affinity (IFNAR2) and low-affinity (IFNAR1) heterodimeric receptor, activating the canonical Jak-STAT signaling pathway resulting in transcriptional activation or repression of interferon-regulated genes that encode the effectors of the interferon response, such as antiviral proteins, regulators of cell proliferation and differentiation, and immunoregulatory proteins. Signals mostly via binding to a IFNAR1-IFNAR2 heterodimeric receptor, but can also function with IFNAR1 alone and independently of Jak-STAT pathways. Elicits a wide variety of responses, including antiviral and antibacterial activities, and can regulate the development of B-cells, myelopoiesis and lipopolysaccharide (LPS)-inducible production of tumor necrosis factor. Plays a role in neuronal homeostasis by regulating dopamine turnover and protecting dopaminergic neurons: acts by promoting neuronal autophagy and alpha-synuclein clearance, thereby preventing dopaminergic neuron loss. IFNB1 is more potent than interferon-alpha (IFN-alpha) in inducing the apoptotic and antiproliferative pathways required for control of tumor cell growth. The chain is Interferon beta from Mus musculus (Mouse).